The primary structure comprises 432 residues: Amino-acid acetyltransferase (432 aa).

Residues 286–432 (EVVREATIED…RNSKIFEKPL (147 aa)) form the N-acetyltransferase domain.

The protein belongs to the acetyltransferase family. ArgA subfamily.

Its subcellular location is the cytoplasm. It carries out the reaction L-glutamate + acetyl-CoA = N-acetyl-L-glutamate + CoA + H(+). It functions in the pathway amino-acid biosynthesis; L-arginine biosynthesis; N(2)-acetyl-L-ornithine from L-glutamate: step 1/4. The polypeptide is Amino-acid acetyltransferase (argA) (Pseudomonas putida (strain ATCC 47054 / DSM 6125 / CFBP 8728 / NCIMB 11950 / KT2440)).